The sequence spans 250 residues: Protein lin-28 homolog B (250 aa).

The interval 1-26 is disordered; sequence MAEGGASKGGGEEPGKLPEPAEEESQ. Residues 29 to 102 enclose the CSD domain; it reads RGTGHCKWFN…GLESIRVTGP (74 aa). 4 positions are modified to phosphoserine: Ser54, Ser96, Ser105, and Ser110. The interval 98-126 is disordered; it reads RVTGPGGSPCLGSERRPKGKTLQKRKPKG. The short motif at 112-125 is the Bipartite nuclear localization signal element; the sequence is RRPKGKTLQKRKPK. Residues 114–125 show a composition bias toward basic residues; sequence PKGKTLQKRKPK. 2 CCHC-type zinc fingers span residues 127–144 and 149–166; these read DRCYNCGGLDHHAKECSL and KKCHYCQSIMHMVANCPH. Cys129, Cys132, His137, Cys142, Cys151, Cys154, His159, and Cys164 together coordinate Zn(2+). The interval 169–250 is disordered; sequence VAQPPASSQG…GPSVQKRKKT (82 aa). Residues 173–191 are compositionally biased toward polar residues; it reads PASSQGRQEAESQPCTSTL. Ser203 bears the Phosphoserine mark. The span at 210–219 shows a compositional bias: basic and acidic residues; it reads ARAEISERSG. The segment covering 220–231 has biased composition (polar residues); the sequence is RSPQEASSTKSS. A Nucleolar localization signal motif is present at residues 239 to 250; the sequence is KKGPSVQKRKKT.

The protein belongs to the lin-28 family. Expressed at high levels in the placenta and, at mucher lower, in testis and fetal liver. Isoform 1 is only detected in placenta and in moderately and poorly differentiated hepatocellular carcinoma cells (at protein level). Isoform 2 is detected in fetal liver, non-tumor liver tissues, as well as well-differentiated tumor tissues (at protein level). Tends to be up-regulated in triple-negative (ER-,PR-,HER2-) breast tumors, as well as in liver, ovarian, and thyroid carcinomas.

It localises to the nucleus. Its subcellular location is the nucleolus. It is found in the cytoplasm. In terms of biological role, suppressor of microRNA (miRNA) biogenesis, including that of let-7 and possibly of miR107, miR-143 and miR-200c. Binds primary let-7 transcripts (pri-let-7), including pri-let-7g and pri-let-7a-1, and sequester them in the nucleolus, away from the microprocessor complex, hence preventing their processing into mature miRNA. Does not act on pri-miR21. The repression of let-7 expression is required for normal development and contributes to maintain the pluripotent state of embryonic stem cells by preventing let-7-mediated differentiation. When overexpressed, recruits ZCCHC11/TUT4 uridylyltransferase to pre-let-7 transcripts, leading to their terminal uridylation and degradation. This activity might not be relevant in vivo, as LIN28B-mediated inhibition of let-7 miRNA maturation appears to be ZCCHC11-independent. Interaction with target pre-miRNAs occurs via an 5'-GGAG-3' motif in the pre-miRNA terminal loop. Mediates MYC-induced let-7 repression. When overexpressed, isoform 1 stimulates growth of the breast adenocarcinoma cell line MCF-7. Isoform 2 has no effect on cell growth. This Homo sapiens (Human) protein is Protein lin-28 homolog B (LIN28B).